Reading from the N-terminus, the 161-residue chain is Cytidylate kinase (161 aa).

7-15 contributes to the ATP binding site; that stretch reads GLAGTGTTT.

The protein belongs to the cytidylate kinase family. Type 2 subfamily.

The protein localises to the cytoplasm. It catalyses the reaction CMP + ATP = CDP + ADP. The enzyme catalyses dCMP + ATP = dCDP + ADP. The sequence is that of Cytidylate kinase (cmk) from Methanothermobacter thermautotrophicus (strain ATCC 29096 / DSM 1053 / JCM 10044 / NBRC 100330 / Delta H) (Methanobacterium thermoautotrophicum).